We begin with the raw amino-acid sequence, 525 residues long: Phosphoenolpyruvate carboxykinase (ATP) 1 (525 aa).

3 residues coordinate substrate: R55, Y190, and K196. Residues K196, H215, and 231-239 (GLSGTGKTT) contribute to the ATP site. The Mn(2+) site is built by K196 and H215. D252 lines the Mn(2+) pocket. Positions 280, 317, and 442 each coordinate ATP. R317 lines the substrate pocket.

It belongs to the phosphoenolpyruvate carboxykinase (ATP) family. It depends on Mn(2+) as a cofactor.

The protein resides in the cytoplasm. The enzyme catalyses oxaloacetate + ATP = phosphoenolpyruvate + ADP + CO2. It participates in carbohydrate biosynthesis; gluconeogenesis. Involved in the gluconeogenesis. Catalyzes the conversion of oxaloacetate (OAA) to phosphoenolpyruvate (PEP) through direct phosphoryl transfer between the nucleoside triphosphate and OAA. This Moorella thermoacetica (strain ATCC 39073 / JCM 9320) protein is Phosphoenolpyruvate carboxykinase (ATP) 1.